Here is an 8525-residue protein sequence, read N- to C-terminus: MADDEDYEEVVEYYTEEVVYEEVPGETITKIYETTTTRTSDYEQSETSKPALAQPALAQPASAKPVERRKVIRKKVDPSKFMTPYIAHSQKMQDLFSPNKYKEKFEKTKGQPYASTTDTPELRRIKKVQDQLSEVKYRMDGDVAKTICHVDEKAKDIEHAKKVSQQVSKVLYKQNWEDTKDKYLLPPDAPELVQAVKNTAMFSKKLYTEDWEADKSLFYPYNDSPELRRVAQAQKALSDVAYKKGLAEQQAQFTPLADPPDIEFAKKVTNQVSKQKYKEDYENKIKGKWSETPCFEVANARMNADNISTRKYQEDFENMKDQIYFMQTETPEYKMNKKAGVAASKVKYKEDYEKNKGKADYNVLPASENPQLRQLKAAGDALSDKLYKENYEKTKAKSINYCETPKFKLDTVLQNFSSDKKYKDSYLKDILGHYVGSFEDPYHSHCMKVTAQNSDKNYKAEYEEDRGKGFFPQTITQEYEAIKKLDQCKDHTYKVHPDKTKFTQVTDSPVLLQAQVNSKQLSDLNYKAKHESEKFKCHIPPDTPAFIQHKVNAYNLSDNLYKQDWEKSKAKKFDIKVDAIPLLAAKANTKNTSDVMYKKDYEKNKGKMIGVLSINDDPKMLHSLKVAKNQSDRLYKENYEKTKAKSMNYCETPKYQLDTQLKNFSEARYKDLYVKDVLGHYVGSMEDPYHTHCMKVAAQNSDKSYKAEYEEDKGKCYFPQTITQEYEAIKKLDQCKDHTYKVHPDKTKFTAVTDSPVLLQAQLNTKQLSDLNYKAKHEGEKFKCHIPADAPQFIQHRVNAYNLSDNVYKQDWEKSKAKKFDIKVDAIPLLAAKANTKNTSDVMYKKDYEKSKGKMIGALSINDDPKMLHSLKTAKNQSDREYRKDYEKSKTIYTAPLDMLQVTQAKKSQAIASDVDYKHILHSYSYPPDSINVDLAKKAYALQSDVEYKADYNSWMKGCGWVPFGSLEMEKAKRASDILNEKKYRQHPDTLKFTSIEDAPITVQSKINQAQRSDIAYKAKGEEIIHKYNLPPDLPQFIQAKVNAYNISENMYKADLKDLSKKGYDLRTDAIPIRAAKAARQAASDVQYKKDYEKAKGKMVGFQSLQDDPKLVHYMNVAKIQSDREYKKDYEKTKSKYNTPHDMFNVVAAKKAQDVVSNVNYKHSLHHYTYLPDAMDLELSKNMMQIQSDNVYKEDYNNWMKGIGWIPIGSLDVEKVKKAGDALNEKKYRQHPDTLKFTSIVDSPVMVQAKQNTKQVSDILYKAKGEDVKHKYTMSPDLPQFLQAKCNAYNISDVCYKRDWYDLIAKGNNVLGDAIPITAAKASRNIASDYKYKEAYEKSKGKHVGFRSLQDDPKLVHYMNVAKLQSDREYKKNYENTKTSYHTPGDMVSITAAKMAQDVATNVNYKQPLHHYTYLPDAMSLEHTRNVNQIQSDNVYKDEYNSFLKGIGWIPIGSLEVEKVKKAGDALNERKYRQHPDTVKFTSVPDSMGMVLAQHNTKQLSDLNYKVEGEKLKHKYTIDPELPQFIQAKVNALNMSDAHYKADWKKTIAKGYDLRPDAIPIVAAKSSRNIASDCKYKEAYEKAKGKQVGFLSLQDDPKLVHYMNVAKIQSDREYKKGYEASKTKYHTPLDMVSVTAAKKSQEVATNANYRQSYHHYTLLPDALNVEHSRNAMQIQSDNLYKSDFTNWMKGIGWVPIESLEVEKAKKAGEILSEKKYRQHPEKLKFTYAMDTMEQALNKSNKLNMDKRLYTEKWNKDKTTIHVMPDTPDILLSRVNQITMSDKLYKAGWEEEKKKGYDLRPDAIAIKAARASRDIASDYKYKKAYEQAKGKHIGFRSLEDDPKLVHFMQVAKMQSDREYKKGYEKSKTSFHTPVDMLSVVAAKKSQEVATNANYRNVIHTYNMLPDAMSFELAKNMMQIQSDNQYKADYADFMKGIGWLPLGSLEAEKNKKAMEIISEKKYRQHPDTLKYSTLMDSMNMVLAQNNAKIMNEHLYKQAWEADKTKVHIMPDIPQIILAKANAINMSDKLYKLSLEESKKKGYDLRPDAIPIKAAKASRDIASDYKYKYNYEKGKGKMVGFRSLEDDPKLVHSMQVAKMQSDREYKKNYENTKTSYHTPADMLSVTAAKDAQANITNTNYKHLIHKYILLPDAMNIELTRNMNRIQSDNEYKQDYNEWYKGLGWSPAGSLEVEKAKKATEYASDQKYRQHPSNFQFKKLTDSMDMVLAKQNAHTMNKHLYTIDWNKDKTKIHVMPDTPDILQAKQNQTLYSQKLYKLGWEEALKKGYDLPVDAISVQLAKASRDIASDYKYKQGYRKQLGHHVGFRSLQDDPKLVLSMNVAKMQSEREYKKDFEKWKTKFSSPVDMLGVVLAKKCQELVSDVDYKNYLHQWTCLPDQNDVVQAKKVYELQSENLYKSDLEWLRGIGWSPLGSLEAEKNKRASEIISEKKYRQPPDRNKFTSIPDAMDIVLAKTNAKNRSDRLYREAWDKDKTQIHIMPDTPDIVLAKANLINTSDKLYRMGYEELKRKGYDLPVDAIPIKAAKASREIASEYKYKEGFRKQLGHHIGARNIEDDPKMMWSMHVAKIQSDREYKKDFEKWKTKFSSPVDMLGVVLAKKCQTLVSDVDYKNYLHQWTCLPDQSDVIHARQAYDLQSDNLYKSDLQWLKGIGWMTSGSLEDEKNKRATQILSDHVYRQHPDQFKFSSLMDSIPMVLAKNNAITMNHRLYTEAWDKDKTTVHIMPDTPEVLLAKQNKVNYSEKLYKLGLEEAKRKGYDMRVDAIPIKAAKASRDIASEFKYKEGYRKQLGHHIGARAIRDDPKMMWSMHVAKIQSDREYKKDFEKWKTKFSSPVDMLGVVLAKKCQTLVSDVDYKNYLHQWTCLPDQSDVIHARQAYDLQSDNMYKSDLQWMRGIGWVSIGSLDVEKCKRATEILSDKIYRQPPDRFKFTSVTDSLEQVLAKNNAITMNKRLYTEAWDKDKTQIHIMPDTPEIMLARMNKINYSESLYKLANEEAKKKGYDLRSDAIPIVAAKASRDIISDYKYKDGYCKQLGHHIGARNIEDDPKMMWSMHVAKIQSDREYKKDFEKWKTKFSSPVDMLGVVLAKKCQTLVSDVDYKNYLHEWTCLPDQSDVIHARQAYDLQSDNIYKSDLQWLRGIGWVPIGSMDVVKCKRATEILSDNIYRQPPDKLKFTSVTDSLEQVLAKNNALNMNKRLYTEAWDKDKTQIHIMPDTPEIMLARQNKINYSETLYKLANEEAKKKGYDLRSDAIPIVAAKASRDVISDYKYKDGYRKQLGHHIGARNIEDDPKMMWSMHVAKIQSDREYKKDFEKWKTKFSSPVDMLGVVLAKKCQTLVSDVDYKNYLHEWTCLPDQNDVIHARQAYDLQSDNIYKSDLQWLRGIGWVPIGSMDVVKCKRAAEILSDNIYRQPPDKLKFTSVTDSLEQVLAKNNALNMNKRLYTEAWDKDKTQVHIMPDTPEIMLARQNKINYSESLYRQAMEEAKKEGYDLRSDAIPIVAAKASRDIASDYKYKEAYRKQLGHHIGARAVHDDPKIMWSLHIAKVQSDREYKKDFEKYKTRYSSPVDMLGIVLAKKCQTLVSDVDYKHPLHEWICLPDQNDIIHARKAYDLQSDNLYKSDLEWMKGIGWVPIDSLEVVRAKRAGELLSDTIYRQRPETLKFTSITDTPEQVLAKNNALNMNKRLYTEAWDNDKKTIHVMPDTPEIMLAKLNRINYSDKLYKLALEESKKEGYDLRLDAIPIQAAKASRDIASDYKYKEGYRKQLGHHIGARNIKDDPKMMWSIHVAKIQSDREYKKEFEKWKTKFSSPVDMLGVVLAKKCQILVSDIDYKHPLHEWTCLPDQNDVIQARKAYDLQSDAIYKSDLEWLRGIGWVPIGSVEVEKVKRAGEILSDRKYRQPADQLKFTCITDTPEIVLAKNNALTMSKHLYTEAWDADKTSIHVMPDTPDILLAKSNSANISQKLYTKGWDESKMKDYDLRADAISIKSAKASRDIASDYKYKEAYEKQKGHHIGAQSIEDDPKIMCAIHAGKIQSEREYKKEFQKWKTKFSSPVDMLSILLAKKCQTLVTDIDYRNYLHEWTCMPDQNDIIQAKKAYDLQSDSVYKADLEWLRGIGWMPEGSVEMNRVKVAQDLVNERLYRTRPEALSFTSIVDTPEVVLAKANSLQISEKLYQEAWNKDKSNITIPSDTPEMLQAHINALQISNKLYQKDWNDAKQKGYDIRADAIEIKHAKASREIASEYKYKEGYRKQLGHHMGFRTLQDDPKSVWAIHAAKIQSDREYKKAYEKSKGIHNTPLDMMSIVQAKKCQVLVSDIDYRNYLHQWTCLPDQNDVIQAKKAYDLQSDNLYKSDLEWLKGIGWLPEGSVEVMRVKNAQNLLNERLYRIKPEALKFTSIVDTPEVIQAKINAVQISEPLYRDAWEKEKANVNVPADTPLMLQSKINALQISNKRYQQAWEDVKMTGYDLRADAIGIQHAKASRDIASDYLYKTAYEKQKGHYIGCRSAKEDPKLVWAANVLKMQNDRLYKKAYNDHKAKISIPVDMVSISAAKEGQALASDVDYRHYLHHWSCFPDQNDVIQARKAYDLQSDSVYKADLEWLRGIGWMPEGSVEMNRVKVAQDLVNERLYRTRPEALSFTSIVDTPEVVLAKANSLQISEKLYQEAWNKDKSNITIPSDTPEMLQAHINALQISNKLYQKDWNDTKQKGYDIRADAIEIKHAKASREIASEYKYKEGYRKQLGHHMGFRTLQDDPKSVWAIHAAKIQSDREYKKAYEKSKGIHNTPLDMMSIVQAKKCQVLVSDIDYRNYLHQWTCLPDQNDVIQAKKAYDLQSDNLYKSDLEWLKGIGWLPEGSVEVMRVKNAQNLLNERLYRIKPEALKFTSIVDTPEVIQAKINAVQISEPLYRNAWEKEKANVNVPADTPLMLQSKINALQISNKRYQQAWEDVKMTGYDLRADAIGIQHAKASRDIASDYLYKTAYEKQKGHYIGCRSAKEDPKLVWAANVLKMQNDRLYKKAYNDHKAKISIPVDMVSISAAKEGQALASDVDYRHYLHHWSCFPDQNDVIQARKAYDLQSDSVYKADLEWLRGIGWMPEGSVEMNRVKVAQDLVNERLYRTRPEALSFTSIVDTPEVVLAKANSLQISEKLYQEAWNKDKSNITIPSDTPEMLQAHINALQISNKLYQKDWNDTKQKGYDIRADAIEIKHAKASREIASEYKYKEGYRKQLGHHMGFRTLQDDPKSVWAIHAAKIQSDREYKKAYEKSKGIHNTPLDMMSIVQAKKCQVLVSDIDYRNYLHQWTCLPDQNDVIQAKKAYDLQSDNLYKSDLEWLKGIGWLPEGSVEVMRVKNAQNLLNERLYRIKPEALKFTSIVDTPEVIQAKINAVQISEPLYRDAWEKEKANVNVPADTPLMLQSKINALQISNKRYQQAWEDVKMTGYDLRADAIGIQHAKASRDIASDYLYKTAYEKQKGHYIGCRSAKEDPKLVWAANVLKMQNDRLYKKAYNDHKAKISIPVDMVSISAAKEGQALASDVDYRHYLHRWSCFPDQNDVIQARKAYDLQSDALYKADLEWLRGIGWMPQGSPEVLRVKNAQNIFCDSVYRTPVVNLKYTSIVDTPEVVLAKSNAENISIPKYREVWDKDKTSIHIMPDTPEINLARANALNVSNKLYREGWDEMKAGCDVRLDAIPIQAAKASREIASDYKYKLDHEKQKGHYVGTLTARDDNKIRWALIADKLQNEREYRLDWAKWKAKIQSPVDMLSILHSKNSQALVSDMDYRNYLHQWTCMPDQNDVIQAKKAYELQSDNVYKADLEWLRGIGWMPNDSVSVNHAKHAADIFSEKKYRTKIETLNFTPVDDRVDYVTAKQSGEILDDIKYRKDWNATKSKYTLTETPLLHTAQEAARILDQYLYKEGWERQKATGYILPPDAVPFVHAHHCNDVQSELKYKAEHVKQKGHYVGVPTMRDDPKLVWFEHAGQIQNERLYKEDYHKTKAKINIPADMVSVLAAKQGQTLVSDIDYRNYLHQWMCHPDQNDVIQARKAYDLQSDNVYRADLEWLRGIGWIPLDSVDHVRVTKNQEMMSQIKYKKNALENYPNFRSVVDPPEIVLAKINSVNQSDVKYKETFNKAKGKYTFSPDTPHISHSKDMGKLYSTILYKGAWEGTKAYGYTLDERYIPIVGAKHADLVNSELKYKETYEKQKGHYLAGKVIGEFPGVVHCLDFQKMRSALNYRKHYEDTKANVHIPNDMMNHVLAKRCQYILSDLEYRHYFHQWTSLLEEPNVIRVRNAQEILSDNVYKDDLNWLKGIGCYVWDTPQILHAKKSYDLQSQLQYTAAGKENLQNYNLVTDTPLYVTAVQSGINASEVKYKENYHQIKDKYTTVLETVDYDRTRNLKNLYSSNLYKEAWDRVKATSYILPSSTLSLTHAKNQKHLASHIKYREEYEKFKALYTLPRSVDDDPNTARCLRVGKLNIDRLYRSVYEKNKMKIHIVPDMVEMVTAKDSQKKVSEIDYRLRLHEWICHPDLQVNDHVRKVTDQISDIVYKDDLNWLKGIGCYVWDTPEILHAKHAYDLRDDIKYKAHMLKTRNDYKLVTDTPVYVQAVKSGKQLSDAVYHYDYVHSVRGKVAPTTKTVDLDRALHAYKLQSSNLYKTSLRTLPTGYRLPGDTPHFKHIKDTRYMSSYFKYKEAYEHTKAYGYTLGPKDVPFVHVRRVNNVTSERLYRELYHKLKDKIHTTPDTPEIRQVKKTQEAVSELIYKSDFFKMQGHMISLPYTPQVIHCRYVGDITSDIKYKEDLQVLKGFGCFLYDTPDMVRSRHLRKLWSNYLYTDKARKMRDKYKVVLDTPEYRKVQELKTHLSELVYRAAGKKQKSIFTSVPDTPDLLRAKRGQKLQSQYLYVELATKERPHHHAGNQTTALKHAKDVKDMVSEKKYKIQYEKMKDKYTPVPDTPILIRAKRAYWNASDLRYKETFQKTKGKYHTVKDALDIVYHRKVTDDISKIKYKENYMSQLGIWRSIPDRPEHFHHRAVTDTVSDVKYKEDLTWLKGIGCYAYDTPDFTLAEKNKTLYSKYKYKEVFERTKSDFKYVADSPINRHFKYATQLMNERKYKSSAKMFLQHGCNEILRPDMLTALYNSHMWSQIKYRKNYEKSKDKFTSIVDTPEHLRTTKVNKQISDILYKLEYNKAKPRGYTTIHDTPMLLHVRKVKDEVSDLKYKEVYQRNKSNCTIEPDAVHIKAAKDAYKVNTNLDYKKQYEANKAHWKWTPDRPDFLQAAKSSLQQSDFEYKLDREFLKGCKLSVTDDKNTVLALRNTLIESDLKYKEKHVKERGTCHAVPDTPQILLAKTVSNLVSENKYKDHVKKHLAQGSYTTLPETRDTVHVKEVTKHVSDTNYKKKFVKEKGKSNYSIMLEPPEVKHAMEVAKKQSDVAYRKDAKENLHYTTVADRPDIKKATQAAKQASEVEYRAKHRKEGSHGLSMLGRPDIEMAKKAAKLSSQVKYRENFDKEKGKTPKYNPKDSQLYKVMKDANNLASEVKYKADLKKLHKPVTDMKESLIMNHVLNTSQLASSYQYKKKYEKSKGHYHTIPDNLEQLHLKEATELQSIVKYKEKYEKERGKPMLDFETPTYITAKESQQMQSGKEYRKDYEESIKGRNLTGLEVTPALLHVKYATKIASEKEYRKDLEESIRGKGLTEMEDTPDMLRAKNATQILNEKEYKRDLELEVKGRGLNAMANETPDFMRARNATDIASQIKYKQSAEMEKANFTSVVDTPEIIHAQQVKNLSSQKKYKEDAEKSMSYYETVLDTPEIQRVRENQKNFSLLQYQCDLKNSKGKITVVQDTPEILRVKENQKNFSSVLYKEDVSPGTAIGKTPEMMRVKQTQDHISSVKYKEAIGQGTPIPDLPEVKRVKETQKHISSVMYKENLGTGIPTTVTPEIERVKRNQENFSSVLYKENLGKGIPTPITPEMERVKRNQENFSSILYKENLSKGTPLPVTPEMERVKLNQENFSSVLYKENVGKGIPIPITPEMERVKHNQENFSSVLYKENLGTGIPIPITPEMQRVKHNQENLSSVLYKENMGKGTPLPVTPEMERVKHNQENISSVLYKENMGKGTPLPVTPEMERVKHNQENISSVLYKENMGKGTPLAVTPEMERVKHNQENISSVLYKENVGKATATPVTPEMQRVKRNQENISSVLYKENLGKATPTPFTPEMERVKRNQENFSSVLYKENMRKATPTPVTPEMERAKRNQENISSVLYSDSFRKQIQGKAAYVLDTPEMRRVRETQRHISTVKYHEDFEKHKGCFTPVVTDPITERVKKNMQDFSDINYRGIQRKVVEMEQKRNDQDQETITGLRVWRTNPGSVFDYDPAEDNIQSRSLHMINVQAQRRSREQSRSASALSISGGEEKSEHSEAPDHHLSTYSDGGVFAVSTAYKHAKTTELPQQRSSSVATQQTTVSSIPSHPSTAGKIFRAMYDYMAADADEVSFKDGDAIINVQAIDEGWMYGTVQRTGRTGMLPANYVEAI.

Residues 34–70 (TTTTRTSDYEQSETSKPALAQPALAQPASAKPVERRK) are disordered. Residues 48 to 64 (SKPALAQPALAQPASAK) are compositionally biased toward low complexity. Nebulin repeat units lie at residues 83–110 (TPYI…KTKG), 112–146 (PYAS…VAKT), 156–181 (DIEH…DTKD), 182–216 (KYLL…ADKS), 217–251 (LFYP…EQQA), 252–286 (QFTP…NKIK), 296–321 (EVAN…NMKD), 323–357 (IYFM…KNKG), 362–396 (NVLP…KTKA), 403–431 (ETPK…KDIL), 433–467 (HYVG…EDRG), 501–535 (KFTQ…SEKF), 536–570 (KCHI…KSKA), 572–606 (KFDI…KNKG), 610–644 (GVLS…KTKA), 680–714 (HYVG…EDKG), 748–782 (KFTA…GEKF), 783–817 (KCHI…KSKA), 819–853 (KFDI…KSKG), 857–891 (GALS…KSKT), 892–918 (IYTA…VDYK), 923–957 (SYSY…SWMK), 968–986 (EMEK…KYRQ), 992–1026 (KFTS…EIIH), 1027–1061 (KYNL…DLSK), 1063–1097 (GYDL…KAKG), 1101–1135 (GFQS…KTKS), 1136–1166 (KYNT…HSLH), 1167–1201 (HYTY…NWMK), 1212–1230 (DVEK…KYRQ), 1236–1270 (KFTS…DVKH), 1271–1305 (KYTM…DLIA), 1307–1341 (GNNV…KSKG), 1345–1379 (GFRS…NTKT), 1380–1407 (SYHT…NYKQ), 1411–1445 (HYTY…SFLK), 1456–1474 (EVEK…KYRQ), 1480–1514 (KFTS…KLKH), 1515–1549 (KYTI…KTIA), 1551–1585 (GYDL…KAKG), 1589–1623 (GFLS…ASKT), 1624–1654 (KYHT…QSYH), 1655–1689 (HYTL…NWMK), 1697–1725 (ESLE…KLKF), 1730–1758 (DTME…KDKT), 1759–1793 (TIHV…EEKK), 1795–1829 (GYDL…QAKG), 1833–1867 (GFRS…KSKT), 1868–1894 (SFHT…ANYR), 1899–1933 (TYNM…DFMK), 1949–1962 (KKAM…KYRQ), 1968–2002 (KYST…ADKT), 2003–2037 (KVHI…ESKK), 2039–2073 (GYDL…KGKG), 2077–2111 (GFRS…NTKT), 2112–2138 (SYHT…TNYK), 2143–2177 (KYIL…EWYK), 2188–2206 (EVEK…KYRQ), 2212–2246 (QFKK…KDKT), 2247–2281 (KIHV…EALK), 2283–2317 (GYDL…KQLG), 2321–2355 (GFRS…KWKT), 2356–2382 (KFSS…VDYK), 2387–2421 (QWTC…WLRG), 2436–2449 (KRAS…KYRQ), 2455–2489 (KFTS…KDKT), 2490–2524 (QIHI…ELKR), 2526–2560 (GYDL…KQLG), 2564–2598 (GARN…KWKT), 2599–2625 (KFSS…VDYK), 2630–2664 (QWTC…WLKG), 2679–2692 (KRAT…VYRQ), 2698–2732 (KFSS…KDKT), 2733–2767 (TVHI…EAKR), 2769–2803 (GYDM…KQLG), 2807–2841 (GARA…KWKT), 2842–2868 (KFSS…VDYK), 2873–2907 (QWTC…WMRG), 2917–2935 (DVEK…IYRQ), 2941–2975 (KFTS…KDKT), 2976–3010 (QIHI…EAKK), 3012–3046 (GYDL…KQLG), 3050–3084 (GARN…KWKT), 3085–3111 (KFSS…VDYK), 3116–3150 (EWTC…WLRG), 3158–3178 (SMDV…IYRQ), 3184–3218 (KFTS…KDKT), 3219–3253 (QIHI…EAKK), 3255–3289 (GYDL…KQLG), 3293–3327 (GARN…KWKT), 3328–3354 (KFSS…VDYK), 3359–3393 (EWTC…WLRG), 3401–3421 (SMDV…IYRQ), 3427–3461 (KFTS…KDKT), 3462–3496 (QVHI…EAKK), 3498–3532 (GYDL…KQLG), 3536–3570 (GARA…KYKT), 3571–3597 (RYSS…VDYK), 3602–3636 (EWIC…WMKG), 3643–3664 (DSLE…IYRQ), 3670–3704 (KFTS…NDKK), 3705–3739 (TIHV…ESKK), 3741–3775 (GYDL…KQLG), 3779–3813 (GARN…KWKT), 3814–3840 (KFSS…IDYK), 3845–3879 (EWTC…WLRG), 3889–3907 (EVEK…KYRQ), 3913–3947 (KFTC…ADKT), 3948–3982 (SIHV…ESKM), 3984–4018 (DYDL…KQKG), 4022–4056 (GAQS…KWKT), 4057–4083 (KFSS…IDYR), 4088–4122 (EWTC…WLRG), 4132–4149 (EMNR…RLYR), 4156–4190 (SFTS…KDKS), 4191–4225 (NITI…DAKQ), 4227–4261 (GYDI…KQLG), 4265–4299 (GFRT…KSKG), 4300–4326 (IHNT…IDYR), 4331–4365 (QWTC…WLKG), 4375–4392 (EVMR…RLYR), 4399–4433 (KFTS…KEKA), 4434–4468 (NVNV…DVKM), 4470–4504 (GYDL…KQKG), 4508–4542 (GCRS…DHKA), 4543–4569 (KISI…VDYR), 4574–4608 (HWSC…WLRG), 4618–4635 (EMNR…RLYR), 4642–4676 (SFTS…KDKS), 4677–4711 (NITI…DTKQ), 4713–4747 (GYDI…KQLG), 4751–4785 (GFRT…KSKG), 4786–4812 (IHNT…IDYR), 4817–4851 (QWTC…WLKG), 4861–4878 (EVMR…RLYR), 4885–4919 (KFTS…KEKA), 4920–4954 (NVNV…DVKM), 4956–4990 (GYDL…KQKG), 4994–5028 (GCRS…DHKA), 5029–5055 (KISI…VDYR), 5060–5094 (HWSC…WLRG), 5104–5121 (EMNR…RLYR), 5128–5162 (SFTS…KDKS), 5163–5197 (NITI…DTKQ), 5199–5233 (GYDI…KQLG), 5237–5271 (GFRT…KSKG), 5272–5298 (IHNT…IDYR), 5303–5337 (QWTC…WLKG), 5347–5364 (EVMR…RLYR), 5371–5405 (KFTS…KEKA), 5406–5440 (NVNV…DVKM), 5442–5476 (GYDL…KQKG), 5480–5514 (GCRS…DHKA), 5515–5541 (KISI…VDYR), 5546–5580 (RWSC…WLRG), 5588–5607 (SPEV…SVYR), 5614–5648 (KYTS…KDKT), 5649–5683 (SIHI…EMKA), 5690–5718 (DAIP…KQKG), 5722–5756 (GTLT…KWKA), 5757–5783 (KIQS…MDYR), 5788–5822 (QWTC…WLRG), 5829–5853 (DSVS…TKIE), 5856–5890 (NFTP…ATKS), 5893–5924 (TLTE…RQKA), 5926–5960 (GYIL…KQKG), 5964–5998 (GVPT…KTKA), 5999–6025 (KINI…IDYR), 6030–6064 (QWMC…WLRG), 6071–6099 (DSVD…ENYP), 6100–6134 (NFRS…KAKG), 6135–6169 (KYTF…GTKA), 6171–6205 (GYTL…KQKG), 6209–6243 (AGKV…DTKA), 6244–6274 (NVHI…HYFH), 6275–6309 (QWTS…WLKG), 6316–6344 (DTPQ…ENLQ), 6345–6379 (NYNL…QIKD), 6380–6414 (KYTT…RVKA), 6416–6450 (SYIL…KFKA), 6458–6488 (VDDD…KNKM), 6489–6515 (KIHI…IDYR), 6532–6554 (HVRK…WLKG), 6561–6589 (DTPE…KTRN), 6590–6624 (DYKL…HSVR), 6626–6660 (KVAP…TLPT), 6661–6695 (GYRL…HTKA), 6697–6731 (GYTL…KLKD), 6732–6766 (KIHT…KMQG), 6767–6801 (HMIS…VLKG), 6808–6836 (DTPD…KMRD), 6837–6871 (KYKV…KQKS), 6872–6906 (IFTS…KERP), 6907–6941 (HHHA…KMKD), 6942–6976 (KYTP…KTKG), 6977–7011 (KYHT…SQLG), 7012–7046 (IWRS…WLKG), 7053–7081 (DTPD…RTKS), 7082–7110 (DFKY…YKSS), 7125–7151 (PDML…KSKD), 7152–7186 (KFTS…KAKP), 7188–7222 (GYTT…RNKS), 7223–7257 (NCTI…ANKA), 7258–7292 (HWKW…FLKG), 7297–7327 (VTDD…KERG), 7328–7362 (TCHA…KHLA), 7365–7399 (SYTT…KEKG), 7402–7433 (NYSI…DAKE), 7436–7470 (HYTT…KEGS), 7479–7505 (PDIE…KEKG), 7514–7542 (DSQL…KLHK), 7543–7577 (PVTD…KSKG), 7578–7612 (HYHT…KERG), 7619–7647 (ETPT…ESIK), 7650–7684 (NLTG…ESIR), 7687–7721 (GLTE…LEVK), 7731–7759 (ETPD…MEKA), 7760–7794 (NFTS…KSMS), 7795–7829 (YYET…NSKG), 7830–7864 (KITV…PGTA), 7867–7888 (KTPE…KYKE), 7892–7921 (QGTP…KENL), 7930–7957 (TPEI…KGIP), 7961–7988 (TPEM…KGTP), 7992–8013 (TPEM…YKEN), 8016–8045 (KGIP…KENL), 8054–8075 (TPEM…YKEN), 8078–8112 (KGTP…KGTP), 8116–8143 (TPEM…KGTP), 8147–8168 (TPEM…YKEN), 8171–8205 (KATA…KATP), 8209–8232 (TPEM…ENMR), 8233–8267 (KATP…KQIQ), 8269–8303 (KAAY…KHKG), and 8304–8330 (CFTP…INYR). The interaction with SVIL stretch occupies residues 8313 to 8468 (ITERVKKNMQ…SIPSHPSTAG (156 aa)). 2 disordered regions span residues 8385 to 8422 (QAQR…LSTY) and 8439 to 8463 (TTEL…IPSH). Basic and acidic residues predominate over residues 8405-8419 (GEEKSEHSEAPDHHL). Positions 8444–8459 (QQRSSSVATQQTTVSS) are enriched in low complexity. Positions 8466-8525 (TAGKIFRAMYDYMAADADEVSFKDGDAIINVQAIDEGWMYGTVQRTGRTGMLPANYVEAI) constitute an SH3 domain.

In terms of assembly, monomer and homooligomer. Interacts with TTN/titin. Interacts with SVIL. Interacts (via nebulin repeats 160-164) with DES. In terms of tissue distribution, expressed in skeletal muscle (at protein level). Located in the thin filament of striated muscle.

The protein resides in the cytoplasm. It localises to the myofibril. The protein localises to the sarcomere. Its subcellular location is the cytoskeleton. Functionally, this giant muscle protein may be involved in maintaining the structural integrity of sarcomeres and the membrane system associated with the myofibrils. Binds and stabilize F-actin. This chain is Nebulin (NEB), found in Homo sapiens (Human).